A 164-amino-acid chain; its full sequence is ATP synthase subunit b (164 aa).

The chain crosses the membrane as a helical span at residues 6–26 (GELVGNFILVTGSVIVLLLLI).

Belongs to the ATPase B chain family. F-type ATPases have 2 components, F(1) - the catalytic core - and F(0) - the membrane proton channel. F(1) has five subunits: alpha(3), beta(3), gamma(1), delta(1), epsilon(1). F(0) has three main subunits: a(1), b(2) and c(10-14). The alpha and beta chains form an alternating ring which encloses part of the gamma chain. F(1) is attached to F(0) by a central stalk formed by the gamma and epsilon chains, while a peripheral stalk is formed by the delta and b chains.

The protein resides in the cell membrane. In terms of biological role, f(1)F(0) ATP synthase produces ATP from ADP in the presence of a proton or sodium gradient. F-type ATPases consist of two structural domains, F(1) containing the extramembraneous catalytic core and F(0) containing the membrane proton channel, linked together by a central stalk and a peripheral stalk. During catalysis, ATP synthesis in the catalytic domain of F(1) is coupled via a rotary mechanism of the central stalk subunits to proton translocation. Component of the F(0) channel, it forms part of the peripheral stalk, linking F(1) to F(0). The protein is ATP synthase subunit b of Streptococcus pyogenes serotype M3 (strain ATCC BAA-595 / MGAS315).